We begin with the raw amino-acid sequence, 252 residues long: uncharacterized protein (252 aa).

This sequence belongs to the GSP E family.

This is an uncharacterized protein from Methanocaldococcus jannaschii (strain ATCC 43067 / DSM 2661 / JAL-1 / JCM 10045 / NBRC 100440) (Methanococcus jannaschii).